Reading from the N-terminus, the 184-residue chain is GTP-binding protein Rheb (184 aa).

Lys-8 is covalently cross-linked (Glycyl lysine isopeptide (Lys-Gly) (interchain with G-Cter in ubiquitin)). The GDP site is built by Ser-16 and Val-17. Ser-16 is a binding site for GTP. GTP contacts are provided by Gly-18, Lys-19, Ser-20, Ser-21, Val-32, Tyr-35, Thr-38, Asn-119, and Asp-122. The GDP site is built by Lys-19, Ser-20, and Ser-21. Ser-20 contributes to the Mg(2+) binding site. Positions 35–43 (YDPTIENTF) match the Effector region motif. Thr-38 contacts GDP. Position 38 (Thr-38) interacts with Mg(2+). Asp-122 provides a ligand contact to GDP. A Phosphoserine; by MAPKAPK5 modification is found at Ser-130. GDP is bound at residue Ala-150. Ala-150 lines the GTP pocket. Position 181 is a cysteine methyl ester (Cys-181). Cys-181 is lipidated: S-farnesyl cysteine. Residues 182–184 (SVM) constitute a propeptide, removed in mature form.

It belongs to the small GTPase superfamily. Rheb family. Associates with the mTORC1 complex (MTOR, MLST8 and RPTOR) in a guanyl nucleotide-independent manner. Interacts with TSC2. Interacts with MCRS1; the interaction maintains RHEB at the lysosome in its active GTP-bound form and prevents its interaction with the mTORC1 complex inhibitor TSC2, ensuring activation of the mTORC1 complex by RHEB. Interacts (when prenylated) with PDE6D; this promotes release from membranes. Post-translationally, farnesylation is important for efficiently activating mTORC1-mediated signaling. Polyubiquitinated in response to amino acid, promoting its interaction with MTOR and mTORC1 activation. Deubiquitination by ATXN3 promotes recruitment of the TSC-TBC complex and RHEB inactivation by TSC2. Monoubiquitinated at Lys-8 by RNF152, promoting its association with the TSC-TBC complex. Deubiquitinated at Lys-8 by USP4, promoting mTORC1 activation. In terms of processing, phosphorylation by MAPKAPK5 impairs GTP-binding and inactivation. In terms of tissue distribution, expressed at high levels in normal adult cortex as well as a number of peripheral tissues, including lung and intestine.

It is found in the endomembrane system. It localises to the lysosome membrane. The protein localises to the golgi apparatus membrane. Its subcellular location is the endoplasmic reticulum membrane. The protein resides in the cytoplasm. It is found in the cytosol. It catalyses the reaction GTP + H2O = GDP + phosphate + H(+). Alternates between an inactive form bound to GDP and an active form bound to GTP. Inactivated by the TSC-TBC complex via the GTPase activating protein (GAP) domain of TSC2. Autoinhibited by Tyr-35, which constrains the active site conformation, restricting the access of the catalytic Asp-65 to the nucleotide-binding pocket. Small GTPase that acts as an allosteric activator of the canonical mTORC1 complex, an evolutionarily conserved central nutrient sensor that stimulates anabolic reactions and macromolecule biosynthesis to promote cellular biomass generation and growth. In response to nutrients, growth factors or amino acids, specifically activates the protein kinase activity of MTOR, the catalytic component of the mTORC1 complex: acts by causing a conformational change that allows the alignment of residues in the active site of MTOR, thereby enhancing the phosphorylation of ribosomal protein S6 kinase (RPS6KB1 and RPS6KB2) and EIF4EBP1 (4E-BP1). RHEB is also required for localization of the TSC-TBC complex to lysosomal membranes. In response to starvation, RHEB is inactivated by the TSC-TBC complex, preventing activation of mTORC1. Has low intrinsic GTPase activity. This Rattus norvegicus (Rat) protein is GTP-binding protein Rheb.